Consider the following 332-residue polypeptide: MNKKVLTLSAVMASLLFGAHAHAADTRIGVTIYKYDDNFMSVVRKAIEKDGKSAPDVQLLMNDSQNDQSKQNDQIDVLLAKGVKALAINLVDPAAAGTVIEKARGQNVPVVFFNKEPSRKALDSYDKAYYVGTDSKESGVIQGDLIAKHWQANQGWDLNKDGKIQYVLLKGEPGHPDAEARTTYVVKELNDKGIQTEQLALDTAMWDTAQAKDKMDAWLSGPNANKIEVVIANNDAMAMGAVEALKAHNKSSIPVFGVDALPEALALVKSGAMAGTVLNDANNQAKATFDLAKNLAEGKGAADGTSWKIENKIVRVPYVGVDKDNLSEFTQK.

The first 23 residues, 1 to 23, serve as a signal peptide directing secretion; sequence MNKKVLTLSAVMASLLFGAHAHA. Beta-D-galactose contacts are provided by Asp37 and Asn114. Beta-D-glucose contacts are provided by Asp37 and Asn114. Residues Asp157, Asn159, Asp161, Lys163, and Gln165 each contribute to the Ca(2+) site. His175, Asp177, and Arg181 together coordinate beta-D-galactose. Beta-D-glucose-binding residues include His175, Asp177, and Arg181. Glu228 provides a ligand contact to Ca(2+). 3 residues coordinate beta-D-galactose: Asn234, Asp259, and Asn279. Beta-D-glucose-binding residues include Asn234, Asp259, and Asn279.

It belongs to the bacterial solute-binding protein 2 family. As to quaternary structure, the ABC transporter complex is composed of one ATP-binding protein (MglA), two transmembrane proteins (MglC) and a solute-binding protein (MglB).

The protein localises to the periplasm. Its function is as follows. Part of the ABC transporter complex MglABC involved in galactose/methyl galactoside import. In addition, binds D-galactose and D-glucose and plays a role in the chemotaxis towards these two sugars by interacting with the Trg chemoreceptor. The sequence is that of D-galactose/methyl-galactoside binding periplasmic protein MglB (mglB) from Salmonella typhimurium (strain LT2 / SGSC1412 / ATCC 700720).